Here is a 344-residue protein sequence, read N- to C-terminus: MRLGLKIASLAIVFLILGCLGGGETETGQKTAKLIIFHAGSLSVPFSQLESEFAKYAEKELGIKVTFQDEASGSVKAVRKVTDLGKKADIVAVADYTLIPQLMVPNYTDFYVLFATNEIVIAFTEKSKYADEMLKNPDKWYEILAREDVSFGFSDPNQDPCGYRSVMVMKLADLYYGKPIFETLVEKTTNIYANGTHIYAPKEIIVKDKRVVIRPKETDLVGLVESGSLDYFFIYKSVAEQHNLKYITLPNEINLKDFSKADFYKKVSITLGSTGKTIYAKPIVYGITVLKDAPNRELALEFLKFLLSEKGKEIFRENHQDFLTPPVAFGNVPEEIKGLVEIKE.

A signal peptide spans 1 to 25 (MRLGLKIASLAIVFLILGCLGGGET). Molybdate is bound by residues 40–41 (GS), Ser74, 159–161 (DPC), Glu217, and Tyr235. Residues 40–41 (GS), Ser74, 159–161 (DPC), Glu217, and Tyr235 each bind tungstate.

Belongs to the bacterial solute-binding protein 1 family. WtpA subfamily. As to quaternary structure, the complex is composed of two ATP-binding proteins (WtpC), two transmembrane proteins (WtpB) and a solute-binding protein (WtpA).

It is found in the cell membrane. In terms of biological role, part of the ABC transporter complex WtpABC involved in molybdate/tungstate import. Binds tungstate and molybdate. In Pyrococcus abyssi (strain GE5 / Orsay), this protein is Molybdate/tungstate-binding protein WtpA (wtpA).